We begin with the raw amino-acid sequence, 608 residues long: Afamin (608 aa).

A signal peptide spans 1 to 21; the sequence is MRHLKLTGFIFFLLPLTESLA. 3 consecutive Albumin domains span residues 22 to 210, 211 to 403, and 404 to 599; these read LPTK…APIT, QYLK…KFNE, and TTQR…KTGD. Asparagine 33 is a glycosylation site (N-linked (GlcNAc...) asparagine). Cystine bridges form between cysteine 77/cysteine 86, cysteine 99/cysteine 114, cysteine 113/cysteine 124, cysteine 148/cysteine 193, cysteine 192/cysteine 201, cysteine 224/cysteine 270, cysteine 269/cysteine 277, cysteine 289/cysteine 303, cysteine 302/cysteine 313, cysteine 340/cysteine 385, and cysteine 384/cysteine 393. Asparagine 109 is a glycosylation site (N-linked (GlcNAc...) asparagine). Residue asparagine 153 is glycosylated (N-linked (GlcNAc...) asparagine). The tract at residues 215-319 is binding pocket for hydrophobic ligands; sequence ASSSYQRNVC…REACIINANK (105 aa). Asparagine 402 carries N-linked (GlcNAc...) asparagine glycosylation. 5 disulfides stabilise this stretch: cysteine 416–cysteine 462, cysteine 461–cysteine 470, cysteine 483–cysteine 499, cysteine 498–cysteine 509, and cysteine 580–cysteine 589. The N-linked (GlcNAc...) asparagine glycan is linked to asparagine 488. Residues 583–608 are disordered; that stretch reads VQEPESCFSPESSKTGDESQATEKQR. Over residues 596-608 the composition is skewed to basic and acidic residues; that stretch reads KTGDESQATEKQR.

This sequence belongs to the ALB/AFP/VDB family. In terms of assembly, forms a 1:1 complex with Wnt family members; interacts with WNT1, WNT2B, WNT3, WNT5A, WNT7A, WNT7B, WNT8, WNT9A, WNT9B, WNT10A and WNT10B. Interacts with WNT3A. In terms of processing, N-glycosylated; more than 90% of the glycans are sialylated. As to expression, detected in brain, especially on brain capillaries (at protein level). Expressed in isolated brain capillaries.

Its subcellular location is the secreted. Its function is as follows. Functions as a carrier for hydrophobic molecules in body fluids. Essential for the solubility and activity of lipidated Wnt family members, including WNT1, WNT2B, WNT3, WNT3A, WNT5A, WNT7A, WNT7B, WNT8, WNT9A, WNT9B, WNT10A and WNT10B. Binds vitamin E. May transport vitamin E in body fluids under conditions where the lipoprotein system is not sufficient. May be involved in the transport of vitamin E across the blood-brain barrier. This is Afamin (Afm) from Mus musculus (Mouse).